Consider the following 446-residue polypeptide: Plant intracellular Ras-group-related LRR protein 3 (446 aa).

The stretch at 65–100 (EACRAVVRLEETHDAYEALLQEAEGRLEAVYRSAME) forms a coiled coil. The tract at residues 101-121 (GKDLEEPDGRDESAAAAAGDD) is disordered. LRR repeat units follow at residues 138 to 160 (GKPVESVRLVDRQLRHLPEAFGR), 161 to 184 (IQGLRVLDVSRNQLEVIPDAIGGL), 185 to 207 (DHLEELRLASNALISLPDSIGLL), 208 to 230 (LNLRILNVGSNRLRSLPDSISKC), 232 to 254 (SLIELDASYNGLAYLPTNIGYEL), 255 to 277 (VNLRKLWVHMNKLRSLPSSICEM), 279 to 300 (SLYLLDAHFNELCGLPSAIGKL), 301 to 324 (SSLEILNLSSNFSDLKDLPASFGD), 325 to 347 (LLNLRELDLSNNQIHALPDNFGR), and 349 to 371 (DKLEKLNLEQNPLSMPPMEIVNK). The GVYW signature appears at 372–384 (GVDAVKEYMLQRW).

It belongs to the SHOC2 family. Widely expressed.

Leucine-rich repeat protein that likely mediates protein interactions, possibly in the context of signal transduction. The protein is Plant intracellular Ras-group-related LRR protein 3 (IRL3) of Oryza sativa subsp. japonica (Rice).